Here is a 226-residue protein sequence, read N- to C-terminus: MRMSKLYKNKEKENEKPSNEPPIKQDSLKRMSSKFLGNSLNSFDLSGKLEQVDEYLKKYPFIIEFGYKLGIKPSYIVVFGGSALFISLVLGWGAALICNLVGFAYPAYQSFKAVESQGHAETKLWLTYWVVFSLFFFIEYLIDIILFWIPFYYVIKLLFLLYLYMPQVRGAETVYNYIIRPILLKHEKTIDDTVHKISQTATNHLNQFTGNIAEKLVQEGVRRRNV.

Residues 1–25 (MRMSKLYKNKEKENEKPSNEPPIKQ) form a disordered region. At 1–72 (MRMSKLYKNK…IEFGYKLGIK (72 aa)) the chain is on the cytoplasmic side. The span at 8–18 (KNKEKENEKPS) shows a compositional bias: basic and acidic residues. A helical transmembrane segment spans residues 73 to 92 (PSYIVVFGGSALFISLVLGW). At 93 to 94 (GA) the chain is on the lumenal side. A helical transmembrane segment spans residues 95–113 (ALICNLVGFAYPAYQSFKA). The Cytoplasmic segment spans residues 114–123 (VESQGHAETK). A helical transmembrane segment spans residues 124–140 (LWLTYWVVFSLFFFIEY). At 141 to 143 (LID) the chain is on the lumenal side. A helical transmembrane segment spans residues 144–162 (IILFWIPFYYVIKLLFLLY). Residues 163–226 (LYMPQVRGAE…VQEGVRRRNV (64 aa)) lie on the Cytoplasmic side of the membrane.

Belongs to the DP1 family. As to quaternary structure, may form oligomers.

It localises to the endoplasmic reticulum membrane. Its function is as follows. Required to generate and maintain the structure of the tubular endoplasmic reticulum network and the digestive (food) vacuole. Induces high curvature in membranes and causes membrane tubule formation. This is Protein YOP1 homolog from Plasmodium berghei (strain Anka).